The chain runs to 411 residues: UDP-N-acetylmuramoylalanine--D-glutamate ligase (411 aa).

92–98 (GTDGKST) contacts ATP.

Belongs to the MurCDEF family.

Its subcellular location is the cytoplasm. It catalyses the reaction UDP-N-acetyl-alpha-D-muramoyl-L-alanine + D-glutamate + ATP = UDP-N-acetyl-alpha-D-muramoyl-L-alanyl-D-glutamate + ADP + phosphate + H(+). It functions in the pathway cell wall biogenesis; peptidoglycan biosynthesis. Its function is as follows. Cell wall formation. Catalyzes the addition of glutamate to the nucleotide precursor UDP-N-acetylmuramoyl-L-alanine (UMA). The sequence is that of UDP-N-acetylmuramoylalanine--D-glutamate ligase from Hydrogenobaculum sp. (strain Y04AAS1).